Reading from the N-terminus, the 436-residue chain is Protein Z-dependent protease inhibitor (436 aa).

Positions 1–20 (MRVVSSLFLPVLLAEVWLVS) are cleaved as a signal peptide. Asn23, Asn42, and Asn69 each carry an N-linked (GlcNAc...) asparagine glycan. The heparin-binding stretch occupies residues 128–145 (AGPLILPALFKRVKETFS). Residues Asn172, Asn189, and Asn287 are each glycosylated (N-linked (GlcNAc...) asparagine).

This sequence belongs to the serpin family. Phosphorylated by FAM20C in the extracellular medium. As to expression, expressed by the liver and secreted in plasma.

It localises to the secreted. Inhibits activity of the coagulation protease factor Xa in the presence of PROZ, calcium and phospholipids. Also inhibits factor XIa in the absence of cofactors. The chain is Protein Z-dependent protease inhibitor (Serpina10) from Rattus norvegicus (Rat).